A 384-amino-acid polypeptide reads, in one-letter code: Ceramide synthase 6 (384 aa).

At 1–34 (MAGILAWFWNERFWLPHNVTWADLKNTEEATFPQ) the chain is on the lumenal side. An N-linked (GlcNAc...) asparagine glycan is attached at asparagine 18. The chain crosses the membrane as a helical span at residues 35 to 55 (AEDLYLAFPLAFCIFMVRLIF). A homeobox-like region spans residues 66–127 (ALNIQANGPQ…RQRRNQEKPS (62 aa)). Positions 130 to 331 (TRFCESMWRF…IVKIACKTVS (202 aa)) constitute a TLC domain. Helical transmembrane passes span 174–194 (LTAD…SLMV), 205–225 (FGIM…SYVN), 263–283 (LFVM…PLWV), and 303–323 (VFNL…YLIV). The Cytoplasmic segment spans residues 324-384 (KIACKTVSKG…LLTGPCSVDD (61 aa)). Residues 335–384 (VSKDDRSDIESSSDDEDSEPPGKKPHSSTTTNGTSGTNGYLLTGPCSVDD) form a disordered region. Residues 361 to 373 (SSTTTNGTSGTNG) are compositionally biased toward low complexity.

N-glycosylated. Glycosylation on Asn-18 is not necessary for function. Post-translationally, acetylated. Deacetylation by SIRT3 increases enzyme activity and promotes mitochondrial ceramide accumulation. In terms of processing, phosphorylated at the C-terminus by CK2. In terms of tissue distribution, broadly expressed, with highest levels in kidney and brain (at protein level).

It is found in the endoplasmic reticulum membrane. The catalysed reaction is a sphingoid base + hexadecanoyl-CoA = an N-hexadecanoyl-sphingoid base + CoA + H(+). It carries out the reaction sphinganine + hexadecanoyl-CoA = N-hexadecanoylsphinganine + CoA + H(+). It catalyses the reaction hexadecasphinganine + hexadecanoyl-CoA = N-hexadecanoylhexadecasphinganine + CoA + H(+). The enzyme catalyses sphing-4-enine + hexadecanoyl-CoA = N-hexadecanoylsphing-4-enine + CoA + H(+). The catalysed reaction is sphinganine + tetradecanoyl-CoA = N-(tetradecanoyl)-sphinganine + CoA + H(+). It carries out the reaction sphinganine + octadecanoyl-CoA = N-(octadecanoyl)-sphinganine + CoA + H(+). It functions in the pathway lipid metabolism; sphingolipid metabolism. Ceramide synthase that catalyzes the transfer of the acyl chain from acyl-CoA to a sphingoid base, with high selectivity toward palmitoyl-CoA (hexadecanoyl-CoA; C16:0-CoA). Can use other acyl donors, but with less efficiency. N-acylates sphinganine and sphingosine bases to form dihydroceramides and ceramides in de novo synthesis and salvage pathways, respectively. Ceramides generated by CERS6 play a role in inflammatory response. Acts as a regulator of metabolism and hepatic lipid accumulation. Under high fat diet, palmitoyl- (C16:0-) ceramides generated by CERS6 specifically bind the mitochondrial fission factor MFF, thereby promoting mitochondrial fragmentation and contributing to the development of obesity. In Mus musculus (Mouse), this protein is Ceramide synthase 6.